Consider the following 216-residue polypeptide: Adenylate kinase (216 aa).

An ATP-binding site is contributed by 10–15; the sequence is GAGKGT. The NMP stretch occupies residues 30 to 59; sequence STGDIFRKNISENTPLGIEAKSYMDNGQLV. AMP contacts are provided by residues T31, R36, 57–59, 85–88, and Q92; these read QLV and GFPR. The LID stretch occupies residues 126–163; the sequence is GRRVCPSCGASYHIKFNPPTNDGKCDLCGSDVIQRKDD. R127 lines the ATP pocket. 2 residues coordinate Zn(2+): C130 and C133. 136–137 provides a ligand contact to ATP; the sequence is SY. The Zn(2+) site is built by C150 and C153. Residues R160 and R171 each contribute to the AMP site. ATP is bound at residue Q199.

The protein belongs to the adenylate kinase family. In terms of assembly, monomer.

The protein localises to the cytoplasm. It catalyses the reaction AMP + ATP = 2 ADP. It functions in the pathway purine metabolism; AMP biosynthesis via salvage pathway; AMP from ADP: step 1/1. Catalyzes the reversible transfer of the terminal phosphate group between ATP and AMP. Plays an important role in cellular energy homeostasis and in adenine nucleotide metabolism. This Clostridium perfringens (strain ATCC 13124 / DSM 756 / JCM 1290 / NCIMB 6125 / NCTC 8237 / Type A) protein is Adenylate kinase.